Consider the following 254-residue polypeptide: Isoprenyl transferase (254 aa).

Residue Asp12 is part of the active site. Asp12 provides a ligand contact to Mg(2+). Substrate-binding positions include 13–16, Trp17, Arg25, His29, and 57–59; these read GNGR and SSE. The Proton acceptor role is filled by Asn60. Residues Trp61, Arg63, Arg180, and 186–188 contribute to the substrate site; that span reads RLS. Glu199 lines the Mg(2+) pocket.

This sequence belongs to the UPP synthase family. In terms of assembly, homodimer. The cofactor is Mg(2+).

In terms of biological role, catalyzes the condensation of isopentenyl diphosphate (IPP) with allylic pyrophosphates generating different type of terpenoids. The protein is Isoprenyl transferase of Brucella suis biovar 1 (strain 1330).